The primary structure comprises 290 residues: Membrane protein insertase YidC 1 (290 aa).

The first 19 residues, 1–19, serve as a signal peptide directing secretion; that stretch reads MKKKALLPLFLGIMIFLAG. Residue Cys-20 is the site of N-palmitoyl cysteine attachment. The S-diacylglycerol cysteine moiety is linked to residue Cys-20. Helical transmembrane passes span 56–76, 134–154, 176–196, 211–231, and 232–252; these read FGLA…PFML, MLGC…YFVL, PDIW…VVSS, MVIS…ALGL, and YWSV…IYYS. The disordered stretch occupies residues 270 to 290; the sequence is HNPYSKKKGKNTQVVSKKNKK. Residues 280–290 show a composition bias toward polar residues; that stretch reads NTQVVSKKNKK.

This sequence belongs to the OXA1/ALB3/YidC family. Type 2 subfamily.

It is found in the cell membrane. Functionally, required for the insertion and/or proper folding and/or complex formation of integral membrane proteins into the membrane. Involved in integration of membrane proteins that insert both dependently and independently of the Sec translocase complex, as well as at least some lipoproteins. The protein is Membrane protein insertase YidC 1 of Staphylococcus epidermidis (strain ATCC 12228 / FDA PCI 1200).